Here is a 264-residue protein sequence, read N- to C-terminus: Diphthine synthase (264 aa).

S-adenosyl-L-methionine is bound by residues leucine 9, aspartate 84, valine 87, 112 to 113 (SI), leucine 164, alanine 207, and histidine 232.

The protein belongs to the diphthine synthase family. As to quaternary structure, homodimer.

It catalyses the reaction 2-[(3S)-amino-3-carboxypropyl]-L-histidyl-[translation elongation factor 2] + 3 S-adenosyl-L-methionine = diphthine-[translation elongation factor 2] + 3 S-adenosyl-L-homocysteine + 3 H(+). Its pathway is protein modification; peptidyl-diphthamide biosynthesis. S-adenosyl-L-methionine-dependent methyltransferase that catalyzes the trimethylation of the amino group of the modified target histidine residue in translation elongation factor 2 (EF-2), to form an intermediate called diphthine. The three successive methylation reactions represent the second step of diphthamide biosynthesis. The chain is Diphthine synthase from Methanothermobacter thermautotrophicus (strain ATCC 29096 / DSM 1053 / JCM 10044 / NBRC 100330 / Delta H) (Methanobacterium thermoautotrophicum).